The chain runs to 425 residues: MSRVKKLHQWKERLRDRARTVSFGRFLWRRFLDDRLFQAAASLAYTTVFALVPLAIVVFGVLSAFPAFNEWKDALTDFIFTNFVPGAARSVQNYLNRSLEDLGKFTVAGMVALVASLLITLHSIEQTFNSIWRVAAARPKVTRFLIYWTVLTLGTMLAAASMAMAAYVFALPLFRTTEGQWLAEFAWRLAPMAVEFICIVLIYRVVPQHVVRLRHALPGALLAVILMEIVKWGFGVYLGNFQTYQRIYGALSALPILLLWIYLSWVSVLLGASLASSMAAFRYQPEAMRLPTGFEIYGLLRLLGRFRQARIHGEGLDEDRILALEPMLTDTLMQELLCELKRMRLLRRDERGQWLLARDLDLVPLAELYENCQLRVPIEDRPLPCRDDAYGQAAAAALEQLRQPLRSVLAQPVGDLYTHLPGDPP.

6 helical membrane passes run 48-68 (VFAL…FPAF), 105-125 (FTVA…HSIE), 154-174 (GTML…LPLF), 182-202 (LAEF…IVLI), 219-239 (GALL…VYLG), and 250-270 (ALSA…SVLL).

The protein belongs to the UPF0761 family.

The protein localises to the cell inner membrane. This Xanthomonas oryzae pv. oryzae (strain PXO99A) protein is UPF0761 membrane protein PXO_04555.